The chain runs to 336 residues: uncharacterized protein (336 aa).

The N-terminal stretch at 1–21 (MSELVLITGITGFVASHSAEA) is a signal peptide. NADP(+) is bound at residue lysine 38. At threonine 153 the chain carries Phosphothreonine. Position 167 (tyrosine 167) interacts with NADP(+).

The protein belongs to the NAD(P)-dependent epimerase/dehydratase family. Dihydroflavonol-4-reductase subfamily.

This is an uncharacterized protein from Schizosaccharomyces pombe (strain 972 / ATCC 24843) (Fission yeast).